We begin with the raw amino-acid sequence, 113 residues long: Large ribosomal subunit protein uL22 (113 aa).

Belongs to the universal ribosomal protein uL22 family. In terms of assembly, part of the 50S ribosomal subunit.

In terms of biological role, this protein binds specifically to 23S rRNA; its binding is stimulated by other ribosomal proteins, e.g. L4, L17, and L20. It is important during the early stages of 50S assembly. It makes multiple contacts with different domains of the 23S rRNA in the assembled 50S subunit and ribosome. Its function is as follows. The globular domain of the protein is located near the polypeptide exit tunnel on the outside of the subunit, while an extended beta-hairpin is found that lines the wall of the exit tunnel in the center of the 70S ribosome. This is Large ribosomal subunit protein uL22 from Magnetococcus marinus (strain ATCC BAA-1437 / JCM 17883 / MC-1).